The following is a 240-amino-acid chain: UDP-2,3-diacylglucosamine hydrolase (240 aa).

Asp-8, His-10, Asp-41, Asn-79, and His-114 together coordinate Mn(2+). 79 to 80 (NR) serves as a coordination point for substrate. 5 residues coordinate substrate: Asp-122, Ser-160, Asn-164, Lys-167, and His-195. Mn(2+) is bound by residues His-195 and His-197.

It belongs to the LpxH family. Mn(2+) serves as cofactor.

It localises to the cell inner membrane. The catalysed reaction is UDP-2-N,3-O-bis[(3R)-3-hydroxytetradecanoyl]-alpha-D-glucosamine + H2O = 2-N,3-O-bis[(3R)-3-hydroxytetradecanoyl]-alpha-D-glucosaminyl 1-phosphate + UMP + 2 H(+). Its pathway is glycolipid biosynthesis; lipid IV(A) biosynthesis; lipid IV(A) from (3R)-3-hydroxytetradecanoyl-[acyl-carrier-protein] and UDP-N-acetyl-alpha-D-glucosamine: step 4/6. Its function is as follows. Hydrolyzes the pyrophosphate bond of UDP-2,3-diacylglucosamine to yield 2,3-diacylglucosamine 1-phosphate (lipid X) and UMP by catalyzing the attack of water at the alpha-P atom. Involved in the biosynthesis of lipid A, a phosphorylated glycolipid that anchors the lipopolysaccharide to the outer membrane of the cell. This is UDP-2,3-diacylglucosamine hydrolase from Escherichia coli O127:H6 (strain E2348/69 / EPEC).